An 808-amino-acid chain; its full sequence is Phospholipase D alpha 1 (808 aa).

One can recognise a C2 domain in the interval 1–125; sequence MAHYLMHGTL…IRGDQVDRWV (125 aa). Aspartate 186 lines the Ca(2+) pocket. In terms of domain architecture, PLD phosphodiesterase 1 spans 326–364; sequence TMFTHHQKIVVVDGEMPSGESQMRRIVSFVGGIDLCDGR. Active-site residues include histidine 331, lysine 333, and aspartate 338. Residue histidine 331 coordinates a 1,2-diacyl-sn-glycero-3-phosphate. Histidine 370 and histidine 404 together coordinate Ca(2+). Positions 520 and 659 each coordinate a 1,2-diacyl-sn-glycero-3-phosphate. In terms of domain architecture, PLD phosphodiesterase 2 spans 654–681; sequence FMIYVHTKMMIVDDEYIIVGSANINQRS. Catalysis depends on residues histidine 659, lysine 661, and aspartate 666. Glutamate 720 contributes to the Ca(2+) binding site.

It belongs to the phospholipase D family. C2-PLD subfamily. Ca(2+) serves as cofactor.

It carries out the reaction a 1,2-diacyl-sn-glycero-3-phosphocholine + H2O = a 1,2-diacyl-sn-glycero-3-phosphate + choline + H(+). In terms of biological role, hydrolyzes glycerol-phospholipids at the terminal phosphodiesteric bond. Plays an important role in various cellular processes. The chain is Phospholipase D alpha 1 from Carica papaya (Papaya).